The chain runs to 504 residues: Peroxisome proliferator-activated receptor gamma (504 aa).

The residue at position 111 (Ser-111) is a Phosphoserine; by MAPK. Residues 135–209 constitute a DNA-binding region (nuclear receptor); sequence AIECRVCGDK…VGMSHNAIRF (75 aa). 2 NR C4-type zinc fingers span residues 138-158 and 175-197; these read CRVCGDKASGFHYGVHACEGC and CDLNCRIHKKSRNKCQYCRFQKC. The interaction with FAM120B stretch occupies residues 204 to 279; that stretch reads HNAIRFGRMP…DKSPFVIYDM (76 aa). The NR LBD domain occupies 237–502; the sequence is DLRALAKHLY…HPLLQEIYKD (266 aa). A Glycyl lysine isopeptide (Lys-Gly) (interchain with G-Cter in ubiquitin) cross-link involves residue Lys-251. The 9aaTAD signature appears at 494–502; the sequence is PLLQEIYKD.

It belongs to the nuclear hormone receptor family. NR1 subfamily. In terms of assembly, interacts with FOXO1 (acetylated form). Heterodimer with other nuclear receptors, such as RXRA. The heterodimer with the retinoic acid receptor RXRA is called adipocyte-specific transcription factor ARF6. Interacts with NCOA6 coactivator, leading to a strong increase in transcription of target genes. Interacts with coactivator PPARBP, leading to a mild increase in transcription of target genes. Interacts with NOCA7 in a ligand-inducible manner. Interacts with NCOA1 and NCOA2 LXXLL motifs. Interacts with ASXL1, ASXL2, DNTTIP2, FAM120B, MAP2K1/MEK1, NR0B2, PDPK1, PRDM16, PRMT2 and TGFB1I1. Interacts (when activated by agonist) with PPP5C. Interacts with HELZ2 and THRAP3; the interaction stimulates the transcriptional activity of PPARG. Interacts with PER2, the interaction is ligand dependent and blocks PPARG recruitment to target promoters. Interacts with NOCT. Interacts with ACTN4. Interacts (when in the liganded conformation) with GPS2. Interacts with CRY1 and CRY2 in a ligand-dependent manner. In the absence of hormonal ligand, interacts with TACC1. In macrophages, interacts with PAQR3 and STUB1; the interactions promote PPARG poylubiquitination and STUB1-mediated degradation. Post-translationally, phosphorylated at basal conditions and dephosphorylated when treated with the ligand. May be dephosphorylated by PPP5C. The phosphorylated form may be inactive and dephosphorylation induces adipogenic activity. Ubiquitinated by E3 ubiquitin-protein ligase complex containing FBXO9; leading to proteasomal degradation. Ubiquitinated at Lys-251 by TRIM55 leading to proteasomal degradation. Ubiquitinated by E3 ubiquitin-protein ligase STUB1/CHIP; leading to proteasomal degradation. Highest expression in adipose tissue and lower in spleen. Very low levels in kidney, intestine, lung and muscle.

The protein localises to the nucleus. The protein resides in the cytoplasm. With respect to regulation, PDPK1 activates its transcriptional activity independently of its kinase activity. Its function is as follows. Nuclear receptor that binds peroxisome proliferators such as hypolipidemic drugs and fatty acids. Once activated by a ligand, the nuclear receptor binds to DNA specific PPAR response elements (PPRE) and modulates the transcription of its target genes, such as acyl-CoA oxidase. It therefore controls the peroxisomal beta-oxidation pathway of fatty acids. Key regulator of adipocyte differentiation and glucose homeostasis. ARF6 acts as a key regulator of the tissue-specific adipocyte P2 (aP2) enhancer. Acts as a critical regulator of gut homeostasis by suppressing NF-kappa-B-mediated pro-inflammatory responses. Plays a role in the regulation of cardiovascular circadian rhythms by regulating the transcription of BMAL1 in the blood vessels. In Sus scrofa (Pig), this protein is Peroxisome proliferator-activated receptor gamma (PPARG).